Reading from the N-terminus, the 332-residue chain is tRNA dimethylallyltransferase (332 aa).

ATP is bound at residue glycine 30–threonine 37. Threonine 32–threonine 37 provides a ligand contact to substrate. The interaction with substrate tRNA stretch occupies residues aspartate 57–glutamine 60.

This sequence belongs to the IPP transferase family. As to quaternary structure, monomer. It depends on Mg(2+) as a cofactor.

The catalysed reaction is adenosine(37) in tRNA + dimethylallyl diphosphate = N(6)-dimethylallyladenosine(37) in tRNA + diphosphate. Catalyzes the transfer of a dimethylallyl group onto the adenine at position 37 in tRNAs that read codons beginning with uridine, leading to the formation of N6-(dimethylallyl)adenosine (i(6)A). This chain is tRNA dimethylallyltransferase, found in Natranaerobius thermophilus (strain ATCC BAA-1301 / DSM 18059 / JW/NM-WN-LF).